The chain runs to 377 residues: Glutamate 5-kinase (377 aa).

K22 provides a ligand contact to ATP. Substrate contacts are provided by S62, D149, and N161. Residues 181 to 182 and 223 to 229 each bind ATP; these read TD and TGGMVTK. Positions 285 to 363 constitute a PUA domain; it reads RGAIVVDAGA…AQLKRFLGPQ (79 aa).

The protein belongs to the glutamate 5-kinase family.

It is found in the cytoplasm. It carries out the reaction L-glutamate + ATP = L-glutamyl 5-phosphate + ADP. It functions in the pathway amino-acid biosynthesis; L-proline biosynthesis; L-glutamate 5-semialdehyde from L-glutamate: step 1/2. In terms of biological role, catalyzes the transfer of a phosphate group to glutamate to form L-glutamate 5-phosphate. The sequence is that of Glutamate 5-kinase from Bifidobacterium longum subsp. infantis (strain ATCC 15697 / DSM 20088 / JCM 1222 / NCTC 11817 / S12).